Here is a 932-residue protein sequence, read N- to C-terminus: DNA mismatch repair protein MutS (932 aa).

Position 615–622 (615–622 (GPNMAGKS)) interacts with ATP.

It belongs to the DNA mismatch repair MutS family.

This protein is involved in the repair of mismatches in DNA. It is possible that it carries out the mismatch recognition step. This protein has a weak ATPase activity. This Clostridium botulinum (strain Kyoto / Type A2) protein is DNA mismatch repair protein MutS.